Reading from the N-terminus, the 272-residue chain is Hemin import ATP-binding protein HmuV (272 aa).

Residues 2-255 (LNADHLHVAR…EPIARCYGFR (254 aa)) enclose the ABC transporter domain. 34-41 (GRNGAGKS) is an ATP binding site.

It belongs to the ABC transporter superfamily. Heme (hemin) importer (TC 3.A.1.14.5) family. In terms of assembly, the complex is composed of two ATP-binding proteins (HmuV), two transmembrane proteins (HmuU) and a solute-binding protein (HmuT).

It is found in the cell inner membrane. Functionally, part of the ABC transporter complex HmuTUV involved in hemin import. Responsible for energy coupling to the transport system. This is Hemin import ATP-binding protein HmuV from Burkholderia mallei (strain ATCC 23344).